The primary structure comprises 474 residues: Selection and upkeep of intraepithelial T-cells protein 4 (474 aa).

Positions 1–25 (MGATEVLTSYCVVLCLLQMVALSSG) are cleaved as a signal peptide. The Extracellular segment spans residues 26-241 (HFTVIGSQRP…VLSGELFSWK (216 aa)). Positions 27–140 (FTVIGSQRPI…EEHITEVKVT (114 aa)) constitute an Ig-like V-type domain. 2 cysteine pairs are disulfide-bonded: Cys48–Cys122 and Cys162–Cys216. N-linked (GlcNAc...) asparagine glycans are attached at residues Asn111 and Asn199. Residues 141 to 234 (ATSSDIQILM…QEQSINIVLS (94 aa)) form the Ig-like C1-type domain. The helical transmembrane segment at 242–262 (IVWIMILSTISFVMIDFCMTY) threads the bilayer. Topologically, residues 263–298 (CVQQQLIHEESLSTVDNDQCESDQSEGTCYKRNYPW) are cytoplasmic. Residues 299 to 319 (IIIAVVPIISVFAIIGVMLFL) traverse the membrane as a helical segment. Over 320–341 (HLEQRVTILEQHFELDTLWLED) the chain is Extracellular. A helical membrane pass occupies residues 342–362 (ISVILCVVIVSNINLIPLIYF). Residues 363–381 (RLHEHVPRFKDRSPILNKA) lie on the Cytoplasmic side of the membrane. A helical transmembrane segment spans residues 382 to 402 (VVFLHFIYFSIVCGTILLVHL). The Extracellular segment spans residues 403–420 (QLRNKVSISDSLFSLYNS). Residues 421 to 441 (WLTDISMILGFLLSIFIVTTI) form a helical membrane-spanning segment. The Cytoplasmic segment spans residues 442 to 474 (AKSSLFNKKWCIGLCIHMKEAEATGGPCEGEEL).

Belongs to the SKINT family. Expressed in skin, thymus and, to a lower extent, bladder and testis.

The protein resides in the membrane. May act by engaging a cell surface molecule on immature T-cells in the embryonic thymus. The chain is Selection and upkeep of intraepithelial T-cells protein 4 (Skint4) from Mus musculus (Mouse).